A 282-amino-acid polypeptide reads, in one-letter code: Pantothenate synthetase (282 aa).

Met-30–His-37 lines the ATP pocket. His-37 acts as the Proton donor in catalysis. Residue Gln-61 coordinates (R)-pantoate. Gln-61 provides a ligand contact to beta-alanine. Residue Gly-147–Asp-150 coordinates ATP. Residue Gln-153 coordinates (R)-pantoate. ATP is bound by residues Val-176 and Lys-184–Arg-187.

Belongs to the pantothenate synthetase family. As to quaternary structure, homodimer.

It localises to the cytoplasm. The catalysed reaction is (R)-pantoate + beta-alanine + ATP = (R)-pantothenate + AMP + diphosphate + H(+). Its pathway is cofactor biosynthesis; (R)-pantothenate biosynthesis; (R)-pantothenate from (R)-pantoate and beta-alanine: step 1/1. Functionally, catalyzes the condensation of pantoate with beta-alanine in an ATP-dependent reaction via a pantoyl-adenylate intermediate. The polypeptide is Pantothenate synthetase (Bacillus cereus (strain AH187)).